The following is a 93-amino-acid chain: Parbolysin P5 (93 aa).

Cystine bridges form between Cys16-Cys37, Cys22-Cys33, and Cys47-Cys60.

The protein belongs to the worm cytolysin family. In terms of tissue distribution, localized within the skin and proboscis and are most readily isolated from body mucus secretions.

Its subcellular location is the secreted. Its function is as follows. Cytolysin that shows hemolytic activity (on bovine erythrocytes, HC(50)=5.75 mg/ml). This hemolytic activity is completely inhibited by small unilamelar vesicles composed of PC/PG, PC/PI and PC/PS in 1:1 molar ratios (with at least 100 mg/ml concentration). This is Parbolysin P5 from Parborlasia corrugatus (Antarctic nemertean worm).